A 185-amino-acid chain; its full sequence is Ribosome-recycling factor (185 aa).

Belongs to the RRF family.

It localises to the cytoplasm. Functionally, responsible for the release of ribosomes from messenger RNA at the termination of protein biosynthesis. May increase the efficiency of translation by recycling ribosomes from one round of translation to another. In Salinispora arenicola (strain CNS-205), this protein is Ribosome-recycling factor.